Consider the following 475-residue polypeptide: 3-isopropylmalate dehydratase large subunit (475 aa).

Positions 349, 409, and 412 each coordinate [4Fe-4S] cluster.

It belongs to the aconitase/IPM isomerase family. LeuC type 1 subfamily. Heterodimer of LeuC and LeuD. Requires [4Fe-4S] cluster as cofactor.

The catalysed reaction is (2R,3S)-3-isopropylmalate = (2S)-2-isopropylmalate. It participates in amino-acid biosynthesis; L-leucine biosynthesis; L-leucine from 3-methyl-2-oxobutanoate: step 2/4. In terms of biological role, catalyzes the isomerization between 2-isopropylmalate and 3-isopropylmalate, via the formation of 2-isopropylmaleate. This is 3-isopropylmalate dehydratase large subunit from Cereibacter sphaeroides (strain KD131 / KCTC 12085) (Rhodobacter sphaeroides).